Here is a 149-residue protein sequence, read N- to C-terminus: Large ribosomal subunit protein bL9 (149 aa).

The protein belongs to the bacterial ribosomal protein bL9 family.

Binds to the 23S rRNA. The sequence is that of Large ribosomal subunit protein bL9 from Xylella fastidiosa (strain 9a5c).